The sequence spans 385 residues: Protein GOLM2 (385 aa).

The Cytoplasmic portion of the chain corresponds to 1–12; that stretch reads MVGFGAPRRTGR. Residues 13–33 traverse the membrane as a helical; Signal-anchor for type II membrane protein segment; the sequence is LPPFVLVALLAVIGLLAFNYW. At 34–385 the chain is on the lumenal side; sequence SVSARQAALH…YHKDHLNETL (352 aa). Residues 44–193 are a coiled coil; sequence DELLGLQAQV…KEELDKQPQK (150 aa). The tract at residues 169–385 is disordered; sequence LAERKREYEE…YHKDHLNETL (217 aa). Composition is skewed to basic and acidic residues over residues 170–193 and 211–220; these read AERK…QPQK and EVKEKIEDPS. Over residues 265 to 283 the composition is skewed to polar residues; that stretch reads LPSQSKSLLEKQPSLQPLS. Over residues 285 to 299 the composition is skewed to basic and acidic residues; it reads TEHEVKKPLPDKKET. Over residues 356-367 the composition is skewed to acidic residues; it reads NGDDGNVEDDDH. A compositionally biased stretch (basic and acidic residues) spans 368–385; it reads DGQADAGEYHKDHLNETL.

It belongs to the GOLM family.

The protein resides in the membrane. In Xenopus laevis (African clawed frog), this protein is Protein GOLM2 (golm2).